A 301-amino-acid chain; its full sequence is Ornithine carbamoyltransferase (301 aa).

Residues Arg100 and 127–130 (HPCQ) each bind carbamoyl phosphate. L-ornithine is bound by residues Asn158, Asp221, and 225 to 226 (SM). Carbamoyl phosphate is bound by residues 260-261 (CL) and Arg288.

It belongs to the aspartate/ornithine carbamoyltransferase superfamily. OTCase family.

The protein localises to the cytoplasm. The enzyme catalyses carbamoyl phosphate + L-ornithine = L-citrulline + phosphate + H(+). It participates in amino-acid biosynthesis; L-arginine biosynthesis; L-arginine from L-ornithine and carbamoyl phosphate: step 1/3. Reversibly catalyzes the transfer of the carbamoyl group from carbamoyl phosphate (CP) to the N(epsilon) atom of ornithine (ORN) to produce L-citrulline. This is Ornithine carbamoyltransferase from Shewanella oneidensis (strain ATCC 700550 / JCM 31522 / CIP 106686 / LMG 19005 / NCIMB 14063 / MR-1).